A 406-amino-acid polypeptide reads, in one-letter code: telomere-associated protein 1 (406 aa).

Basic and acidic residues predominate over residues 20 to 40 (EHHNGSHDNDDKDKEDKEKQN). The tract at residues 20–46 (EHHNGSHDNDDKDKEDKEKQNTEAVAA) is disordered. The 60-residue stretch at 147 to 206 (TTRRVRLRWTQEETADLMEGCKVHGVGNWKKILTDPRFRFNNRTAVDLKDRFRTCFPEDY) folds into the HTH myb-type domain. Positions 175 to 202 (WKKILTDPRFRFNNRTAVDLKDRFRTCF) form a DNA-binding region, H-T-H motif. One can recognise a Myb-like domain in the interval 234-288 (VNRKERRVFTPEEDERLLNGFMKHGPSWSNIQRDNELGLFERRSTDLRDRFRNAF). The interval 368–389 (TQELQPQAHSRKQQGGDGLKEE) is disordered.

The protein localises to the nucleus. Its subcellular location is the chromosome. It is found in the telomere. Telomere-binding protein that mediates telomere clustering by promoting formation of head-to-head dimers of DNA molecules through the telomeric tracts. Binds specifically 5'-TTAGTCAGGG-3' repeats in subtelomeric regions. In Yarrowia lipolytica (strain CLIB 122 / E 150) (Yeast), this protein is telomere-associated protein 1.